The chain runs to 172 residues: Tail tube protein (172 aa).

This sequence belongs to the P2likevirus major tail tube protein family.

Its subcellular location is the virion. In terms of biological role, forms the virus tail tube. This chain is Tail tube protein (FII), found in Escherichia phage P2 (Bacteriophage P2).